The chain runs to 518 residues: Ribonuclease Y (518 aa).

Residues Val-2–Ile-22 form a helical membrane-spanning segment. Residues Gln-91 to Ala-119 are disordered. The KH domain maps to Thr-208 to Leu-268. One can recognise an HD domain in the interval Val-334–Ala-427.

Belongs to the RNase Y family.

It is found in the cell membrane. Functionally, endoribonuclease that initiates mRNA decay. The protein is Ribonuclease Y of Enterococcus faecalis (strain ATCC 700802 / V583).